A 182-amino-acid chain; its full sequence is Vacuolar protein sorting-associated protein 29 (182 aa).

K50 carries the N6-acetyllysine modification.

It belongs to the VPS29 family. In terms of assembly, component of the commander complex consisting of the CCC subcomplex and the retriever subcomplex. Component of the heterotrimeric retriever complex formed by VPS26C, VPS29 and VPS35L; within the complex interacts with VPS35L. Component of the heterotrimeric retromer cargo-selective complex (CSC), also described as vacuolar protein sorting subcomplex (VPS), formed by VPS26 (VPS26A or VPS26B), VPS29 and VPS35. The CSC has a highly elongated structure with VPS26 and VPS29 binding independently at opposite distal ends of VPS35 as central platform. The CSC is believed to associate with variable sorting nexins to form functionally distinct retromer complex variants. The originally described retromer complex (also called SNX-BAR retromer) is a pentamer containing the CSC and a heterodimeric membrane-deforming subcomplex formed between SNX1 or SNX2 and SNX5 or SNX6 (also called SNX-BAR subcomplex); the respective CSC and SNX-BAR subcomplexes associate with low affinity. The CSC associates with SNX3 to form a SNX3-retromer complex. The CSC associates with SNX27, the WASH complex and the SNX-BAR subcomplex to form the SNX27-retromer complex. Interacts with VPS26A, VPS35, SNX1, SNX2, SNX3, SNX27, WASHC5. Interacts with TBC1D5; this interaction is blocked by VPS35L in the retriever complex. Interacts with SNX17; the interaction is indirect; SNX17 (via its C-terminus) interacts with the retriever complex (via VPS26C and VPS35L). Interacts with VPS26B and ANKRD27.

It localises to the cytoplasm. Its subcellular location is the membrane. It is found in the endosome membrane. The protein resides in the early endosome. The protein localises to the late endosome. Its function is as follows. Component of the commander complex that is essential for endosomal recycling of transmembrane cargos; the commander complex is composed of the CCC subcomplex and the retriever subcomplex. Component of the retriever complex, which is a heterotrimeric complex related to retromer cargo-selective complex (CSC) and essential for retromer-independent retrieval and recycling of numerous cargos such as integrin alpha-5/beta-1 (ITGA5:ITGB1). Component of the retromer cargo-selective complex (CSC). The CSC is believed to be the core functional component of retromer or respective retromer complex variants acting to prevent missorting of selected transmembrane cargo proteins into the lysosomal degradation pathway. The recruitment of the CSC to the endosomal membrane involves RAB7A and SNX3. The SNX-BAR retromer mediates retrograde transport of cargo proteins from endosomes to the trans-Golgi network (TGN) and is involved in endosome-to-plasma membrane transport for cargo protein recycling. The SNX3-retromer mediates the retrograde endosome-to-TGN transport of WLS distinct from the SNX-BAR retromer pathway. The SNX27-retromer is believed to be involved in endosome-to-plasma membrane trafficking and recycling of a broad spectrum of cargo proteins. The CSC seems to act as recruitment hub for other proteins, such as the WASH complex and TBC1D5. Required to regulate transcytosis of the polymeric immunoglobulin receptor (pIgR-pIgA). In the endosomes, retriever complex drives the retrieval and recycling of NxxY-motif-containing cargo proteins by coupling to SNX17, a cargo essential for the homeostatic maintenance of numerous cell surface proteins associated with processes that include cell migration, cell adhesion, nutrient supply and cell signaling. The recruitment of the retriever complex to the endosomal membrane involves CCC and WASH complexes. Involved in GLUT1 endosome-to-plasma membrane trafficking; the function is dependent of association with ANKRD27. This chain is Vacuolar protein sorting-associated protein 29, found in Rattus norvegicus (Rat).